A 366-amino-acid polypeptide reads, in one-letter code: Class I histocompatibility antigen, Gogo-C*0201 alpha chain (366 aa).

The N-terminal stretch at 1 to 24 (MRVMAPRTLILPLSGALALTETWA) is a signal peptide. The tract at residues 25 to 114 (GSHSMRYFYT…LRGYYNQSED (90 aa)) is alpha-1. The Extracellular segment spans residues 25-308 (GSHSMRYFYT…EPSSQPTIPI (284 aa)). N-linked (GlcNAc...) asparagine glycosylation occurs at Asn-110. The tract at residues 115 to 206 (GSHTLQSMYG…ENGKETLQRA (92 aa)) is alpha-2. 2 cysteine pairs are disulfide-bonded: Cys-125/Cys-188 and Cys-227/Cys-283. An alpha-3 region spans residues 207–298 (EPPKTHVTHH…GLPEPLTLRW (92 aa)). Residues 209 to 297 (PKTHVTHHPL…EGLPEPLTLR (89 aa)) enclose the Ig-like C1-type domain. Residues 299–308 (EPSSQPTIPI) form a connecting peptide region. A helical membrane pass occupies residues 309-333 (VGIVVGLAVLVVLAVLGAVVTAMMC). Residues 334 to 366 (RRKSSGGKGGSCSQAACSNSAQGSDESLITCKA) lie on the Cytoplasmic side of the membrane.

This sequence belongs to the MHC class I family. Heterodimer of an alpha chain and a beta chain (beta-2-microglobulin).

Its subcellular location is the membrane. Functionally, involved in the presentation of foreign antigens to the immune system. The polypeptide is Class I histocompatibility antigen, Gogo-C*0201 alpha chain (Gorilla gorilla gorilla (Western lowland gorilla)).